The following is a 465-amino-acid chain: MARNRQACDCCCIRRVKCDRKKPCKCCLQHNLQCTYLRPLKKRGPKPVKVRNLKKVDDVQVFSKSSSGGIMKVPKALIDQCLRLYNDKLYVIWPLLCYDDLYELLEKRYDETCVYWFLVSLSAATLSDLQTEIESEGGVTFTGIQLSSFCMSSRQEFDDFNGSDIFKIMTYYCLNRCYAQMSNSRTSYRLSCEAVGLIKLAGFHREETLKLLPFDEQQLGRKVYYLLLLTERYFSVYTHCATSLDTTIAPPQPENVTDPRLSLDSFLEMIRVFTVPGKCFFDALATDSANVTCTEDSLKKIWRELHTVPLEIEPWSYGYVDISFSRHWIRTLAWKLVLQISGMRISFLSNSKNTHIPVEIARDMLEDTFLIPKNLYAVHGPGISVKALEIADALVDVVNQYDQNAESEAWNFLFDISKFVFSLKHCDSTLVDKFTTKCQCALITLPLSNPLESTDGSKEDVDALP.

A DNA-binding region (zn(2)-C6 fungal-type) is located at residues Cys8–Cys34.

This sequence belongs to the MAL13 family.

Its subcellular location is the nucleus. Transcription factor that regulates respiratory growth and plays a critical role in stress adaptation during non-fermentative growth. Binds to promoters of genes involved in non-fermentative metabolism, including processes such as gluconeogenesis (PCK1, FBP1 and MDH2), glyoxylate shunt (MLS1 and ICL1) and the tricarboxylic acid cycle (ACO1). Plays a role in maintaining mitochondrial morphology and function. Also plays a role in tolerance to pH and osmotic stress, especially during the oxidative metabolism. The chain is Respiratory transcription factor ZNF1 from Saccharomyces cerevisiae (strain ATCC 204508 / S288c) (Baker's yeast).